The chain runs to 259 residues: ATP synthase subunit a (259 aa).

5 consecutive transmembrane segments (helical) span residues 29–49 (TVNIDSMVFSVVLGTLFIWLF), 89–109 (LIAPLALTIFVWIFLMNAMDL), 132–154 (SADVNITLSMALGVFFLILFYSI), 209–229 (IFILIAAMLPWWSQWFLNVPW), and 230–250 (AIFHILIITLQAFIFMVLTIV).

The protein belongs to the ATPase A chain family. F-type ATPases have 2 components, CF(1) - the catalytic core - and CF(0) - the membrane proton channel. CF(1) has five subunits: alpha(3), beta(3), gamma(1), delta(1), epsilon(1). CF(0) has three main subunits: a(1), b(2) and c(9-12). The alpha and beta chains form an alternating ring which encloses part of the gamma chain. CF(1) is attached to CF(0) by a central stalk formed by the gamma and epsilon chains, while a peripheral stalk is formed by the delta and b chains.

The protein localises to the cell inner membrane. Its function is as follows. Key component of the proton channel; it plays a direct role in the translocation of protons across the membrane. The polypeptide is ATP synthase subunit a (Tolumonas auensis (strain DSM 9187 / NBRC 110442 / TA 4)).